Here is an 800-residue protein sequence, read N- to C-terminus: Mitochondrial intermediate peptidase (800 aa).

Residues 1-23 (MAGHMLMPLRRRPWTCRACLQRL) constitute a mitochondrion transit peptide. Over residues 27–41 (RRSLETAASPSSQSD) the composition is skewed to polar residues. The segment at 27-59 (RRSLETAASPSSQSDVYDYAPTNHSTQKKSNDE) is disordered. Histidine 563 contributes to the Zn(2+) binding site. Glutamate 564 is a catalytic residue. Zn(2+) contacts are provided by histidine 567 and histidine 570.

The protein belongs to the peptidase M3 family. Requires Zn(2+) as cofactor.

It localises to the mitochondrion matrix. It catalyses the reaction Release of an N-terminal octapeptide as second stage of processing of some proteins imported into the mitochondrion.. Its function is as follows. Cleaves proteins, imported into the mitochondrion, to their mature size. While most mitochondrial precursor proteins are processed to the mature form in one step by mitochondrial processing peptidase (MPP), the sequential cleavage by MIP of an octapeptide after initial processing by MPP is a required step for a subgroup of nuclear-encoded precursor proteins destined for the matrix or the inner membrane. The protein is Mitochondrial intermediate peptidase (oct1) of Aspergillus oryzae (strain ATCC 42149 / RIB 40) (Yellow koji mold).